The chain runs to 361 residues: Protein RecA (361 aa).

77 to 84 is an ATP binding site; sequence GPESSGKT.

Belongs to the RecA family.

It is found in the cytoplasm. In terms of biological role, can catalyze the hydrolysis of ATP in the presence of single-stranded DNA, the ATP-dependent uptake of single-stranded DNA by duplex DNA, and the ATP-dependent hybridization of homologous single-stranded DNAs. It interacts with LexA causing its activation and leading to its autocatalytic cleavage. This is Protein RecA from Brucella anthropi (strain ATCC 49188 / DSM 6882 / CCUG 24695 / JCM 21032 / LMG 3331 / NBRC 15819 / NCTC 12168 / Alc 37) (Ochrobactrum anthropi).